The sequence spans 289 residues: Caffeoylpyruvate hydrolase (289 aa).

The a divalent metal cation site is built by Glu140, Glu142, and Asp171.

This sequence belongs to the FAH family. As to quaternary structure, homodimer. The cofactor is Mg(2+). Requires Mn(2+) as cofactor.

It catalyses the reaction (E)-caffeoylpyruvate + H2O = (E)-caffeate + pyruvate + H(+). It participates in secondary metabolite biosynthesis. Its function is as follows. Caffeoylpyruvate hydrolase; part of the gene cluster that mediates the fungal bioluminescence cycle. Involved in the recycling of oxyluciferin, a pyruvic acid adduct of caffeic acid, to caffeic acid. The fungal bioluminescence cycle begins with the hispidin synthetase that catalyzes the formation of hispidin which is further hydroxylated by the hispidin-3-hydroxylase, yielding the fungal luciferin 3-hydroxyhispidin. The luciferase then produces an endoperoxide as a high-energy intermediate with decomposition that yields oxyluciferin (also known as caffeoylpyruvate) and light emission. Oxyluciferin can be recycled to caffeic acid by caffeoylpyruvate hydrolase. In Neonothopanus nambi (Agaricus nambi), this protein is Caffeoylpyruvate hydrolase.